The sequence spans 526 residues: Protein ERGIC-53-like (526 aa).

Residues 1–25 (MPAVSGPGPLFCLLLLLLDPHSPET) form the signal peptide. Over 26-462 (GCPPLRRFEY…QPPRASSCLQ (437 aa)) the chain is Lumenal. Residues 31–252 (RRFEYKLSFK…DVLSFLTFSL (222 aa)) form the L-type lectin-like domain. N75 carries N-linked (GlcNAc...) asparagine glycosylation. C176 and C215 are disulfide-bonded. The helical transmembrane segment at 463–483 (PGIFLFYLLIQTVGFFGYVHF) threads the bilayer. Topologically, residues 484-526 (RQELNKSLQECLSTGSLPLGPAPHTPRALGILRRQPLPASMPA) are cytoplasmic.

In terms of tissue distribution, highly expressed in normal and neoplastic prostate. Also expressed in cardiac atrium, salivary gland, spleen and selective cells in the CNS.

The protein resides in the endoplasmic reticulum-Golgi intermediate compartment membrane. The protein is Protein ERGIC-53-like (LMAN1L) of Homo sapiens (Human).